A 199-amino-acid chain; its full sequence is Protein GrpE (199 aa).

Positions 1–10 (MTNQTEKEQV) are enriched in basic and acidic residues. The interval 1–44 (MTNQTEKEQVEQDVSQATELAQEAQEAQTQDVEPELQQNNEIDP) is disordered. Residues 16–30 (QATELAQEAQEAQTQ) show a composition bias toward low complexity.

It belongs to the GrpE family. In terms of assembly, homodimer.

Its subcellular location is the cytoplasm. In terms of biological role, participates actively in the response to hyperosmotic and heat shock by preventing the aggregation of stress-denatured proteins, in association with DnaK and GrpE. It is the nucleotide exchange factor for DnaK and may function as a thermosensor. Unfolded proteins bind initially to DnaJ; upon interaction with the DnaJ-bound protein, DnaK hydrolyzes its bound ATP, resulting in the formation of a stable complex. GrpE releases ADP from DnaK; ATP binding to DnaK triggers the release of the substrate protein, thus completing the reaction cycle. Several rounds of ATP-dependent interactions between DnaJ, DnaK and GrpE are required for fully efficient folding. This chain is Protein GrpE, found in Glaesserella parasuis serovar 5 (strain SH0165) (Haemophilus parasuis).